The following is a 320-amino-acid chain: Mitochondrial glutamate carrier 2 (320 aa).

3 Solcar repeats span residues 11–97 (LSIS…LRQL), 105–215 (RNLK…LNQL), and 224–313 (ASFT…GIGE). Transmembrane regions (helical) follow at residues 17–37 (LING…IDLA), 66–86 (FLGM…EKAI), and 110–128 (EMLA…TCPM). Residue serine 150 is modified to Phosphoserine. 3 consecutive transmembrane segments (helical) span residues 190-210 (GLGA…PLFA), 230-250 (FVAG…LDVL), and 293-313 (ALVI…GIGE).

This sequence belongs to the mitochondrial carrier (TC 2.A.29) family.

The protein resides in the mitochondrion inner membrane. The catalysed reaction is L-glutamate(in) + H(+)(in) = L-glutamate(out) + H(+)(out). Responsible for the transport of glutamate from the cytosol into the mitochondrial matrix with the concomitant import of a proton (symport system). In Mus musculus (Mouse), this protein is Mitochondrial glutamate carrier 2 (Slc25a18).